Reading from the N-terminus, the 602-residue chain is MSRHMRAPRFDPRAGFHAEGKDRGPSVPQGLLKAARSSGQLNLAGRNLGEVPQCVWRINVDIPEEANQNLSFSSTERWWDQTDLTKLIISSNKLQSLSDDLRLLPALTVLDIHDNQLTSLPSAIRELDNLQKLNVSHNKLKILPEEITSLKNLRTLHLQHNELTCIPEGFEHLSCLEDLDLSSNRLATVPADFALLSSLLRLNLSSNQLKNLPAEISRMKRLKHLDCDANLLETVPPDVGSMESLELLYLRRNKLRVLPEFPSCRQLKELHLAENQIEKLGAEHLQHLQAILVLDLRGNKLRSVPEEMALLQSLERLDLSNNDISSLPCSLGNLHLKFLALEGNPLRTIRREIIAKGTQEVLKYLRSKIKDDRTNQNDSVPETAMTLPSEARVNIHAIATLKLLDYSDKQATLIPDDLFDATKTTLITSINFSKNQLCEIPQRIVELKEMVLDINLSFNKLSFISHELCLLQKLTFLDLRNNFLSSLPEEMSSLTKLQTINLSFNRFKVFPEVLYRISTLEAVLISNNQVGSVDPQKMKLMENLNTLDLQNNDLLQIPPELGNCVQLRTLLLDGNPFRVPRAAILMKGTAAVLEYLRDRIPA.

Positions 1–26 (MSRHMRAPRFDPRAGFHAEGKDRGPS) are disordered. A compositionally biased stretch (basic and acidic residues) spans 8–24 (PRFDPRAGFHAEGKDRG). The stretch at 35 to 58 (ARSSGQLNLAGRNLGEVPQCVWRI) is one LRR 1 repeat. S71 bears the Phosphoserine mark. LRR repeat units lie at residues 81–103 (QTDL…DLRL), 104–126 (LPAL…AIRE), 127–149 (LDNL…EITS), 150–172 (LKNL…GFEH), 174–195 (SCLE…DFAL), 196–219 (LSSL…ISRM), 221–241 (RLKH…DVGS), 242–266 (MESL…SCRQ), 268–287 (KELH…HLQH), 288–310 (LQAI…EMAL), 311–334 (LQSL…LGNL), 336–356 (LKFL…IIAK), 398–421 (IATL…LFDA), 424–447 (TTLI…IVEL), 449–470 (EMVL…ELCL), 471–494 (LQKL…MSSL), 496–517 (KLQT…LYRI), 519–540 (TLEA…KMKL), 541–564 (MENL…LGNC), and 566–587 (QLRT…ILMK).

The sequence is that of Leucine-rich repeat-containing protein 40 (Lrrc40) from Mus musculus (Mouse).